A 176-amino-acid chain; its full sequence is Small ribosomal subunit protein uS5 (176 aa).

Positions 11–74 (LSEVLVDVNR…QAAKKKMMKV (64 aa)) constitute an S5 DRBM domain.

Belongs to the universal ribosomal protein uS5 family. As to quaternary structure, part of the 30S ribosomal subunit. Contacts proteins S4 and S8.

In terms of biological role, with S4 and S12 plays an important role in translational accuracy. Functionally, located at the back of the 30S subunit body where it stabilizes the conformation of the head with respect to the body. The sequence is that of Small ribosomal subunit protein uS5 from Rickettsia bellii (strain RML369-C).